We begin with the raw amino-acid sequence, 623 residues long: Protein EDS1 (623 aa).

An N-acetylalanine modification is found at A2. The active-site Nucleophile is the S123. Catalysis depends on charge relay system residues D187 and H317. A coiled-coil region spans residues 358–383 (VQAALEEEKKRVENQKKIIQVIEQER).

Homodimer. Interacts with RPS4, RPS6, SNC1, SRFR1, AvrRps4 and HopA1. Part of a nuclear complex made of EDS1, PAD4 and SAG101, that can be redirected to the cytoplasm in the presence of an extranuclear form of EDS1. Interacts (via N-terminus) with PAD4 (via N-terminus). Interacts (via N-terminus) with SAG101. EDS1-SAG101 and EDS1-PAD4 form separate complexes in pathogen-unchallenged cells. Part of a nuclear protein complex made of VICTR, PAD4 and EDS1. Interacts with VICTR.

The protein localises to the nucleus. It is found in the cytoplasm. The protein resides in the microsome. Functionally, positive regulator of basal resistance and of effector-triggered immunity specifically mediated by TIR-NB-LRR (TNL) resistance proteins. Disruption by bacterial effector of EDS1-TIR-NB-LRR resistance protein interactions constitutes the first step in resistance activation. Acts redundantly with salicylic acid to regulate resistance gene-mediated signaling. Triggers early plant defenses and hypersensitive response independently of PAD4, and then recruits PAD4 to potentiate plant defenses through the accumulation of salicylic acid. Nuclear localization is essential for basal and TNL-conditioned immunity and for reprogramming defense gene expression, while cytoplasmic EDS1 is required to induce a complete immune response. Heterodimerization with PAD4 and/or SGA101 is necessary for TNL-mediated effector-triggered immunity. Contributes to nonhost resistance against E.amylovora. Loss of EDS1-PAD4 interaction compromises basal but not TNL-triggered resistance. Necessary for systemic acquired resistance (SAR) signal generation and perception. Has no direct lipase activity. Putative lipase activity is dispensable for immune functions. In Arabidopsis thaliana (Mouse-ear cress), this protein is Protein EDS1.